A 284-amino-acid polypeptide reads, in one-letter code: NAD kinase (284 aa).

The Proton acceptor role is filled by Asp-70. Residues 70 to 71 (DG), 139 to 140 (NE), Lys-167, Asp-169, Leu-177, 180 to 185 (TAYNLS), and Gln-236 each bind NAD(+).

This sequence belongs to the NAD kinase family. Requires a divalent metal cation as cofactor.

It localises to the cytoplasm. The catalysed reaction is NAD(+) + ATP = ADP + NADP(+) + H(+). Functionally, involved in the regulation of the intracellular balance of NAD and NADP, and is a key enzyme in the biosynthesis of NADP. Catalyzes specifically the phosphorylation on 2'-hydroxyl of the adenosine moiety of NAD to yield NADP. The polypeptide is NAD kinase (Helicobacter pylori (strain J99 / ATCC 700824) (Campylobacter pylori J99)).